A 597-amino-acid chain; its full sequence is Centrosomal protein of 70 kDa (597 aa).

The interval 1–23 (MFPVAPKPQDSSQASDRLMTEKQ) is disordered. 2 coiled-coil regions span residues 66 to 179 (MRQN…QMEV) and 254 to 326 (TYKG…KKAE). One copy of the TPR repeat lies at 483–516 (NGVYPRMNEVYTRLGEMNNAVRNLQELLELDSSS).

In terms of assembly, directly interacts with tubulin-gamma; this interaction determines centrosomal localization.

It localises to the cytoplasm. Its subcellular location is the cytoskeleton. It is found in the microtubule organizing center. The protein resides in the centrosome. In terms of biological role, plays a role in the organization of both preexisting and nascent microtubules in interphase cells. During mitosis, required for the organization and orientation of the mitotic spindle. This is Centrosomal protein of 70 kDa (CEP70) from Pongo abelii (Sumatran orangutan).